Consider the following 215-residue polypeptide: Cytidylate kinase (215 aa).

10-18 (GPAASGKGT) contributes to the ATP binding site.

It belongs to the cytidylate kinase family. Type 1 subfamily.

It is found in the cytoplasm. The enzyme catalyses CMP + ATP = CDP + ADP. It carries out the reaction dCMP + ATP = dCDP + ADP. The chain is Cytidylate kinase from Bartonella tribocorum (strain CIP 105476 / IBS 506).